Consider the following 714-residue polypeptide: Epithelial splicing regulatory protein 1 (714 aa).

RRM domains are found at residues 225–302, 326–406, and 450–530; these read TVIR…KATG, IIVR…KSTA, and DCVR…ACSA.

It belongs to the ESRP family.

The protein localises to the nucleus. Its function is as follows. mRNA splicing factor that regulates the formation of epithelial cell-specific isoforms. Specifically regulates the expression of FGFR2-IIIb, an epithelial cell-specific isoform of fgfr2. Acts by directly binding specific sequences in mRNAs. Binds the GU-rich sequence motifs in the ISE/ISS-3, a cis-element regulatory region present in the mRNA of fgfr2. The protein is Epithelial splicing regulatory protein 1 (esrp1) of Danio rerio (Zebrafish).